The primary structure comprises 147 residues: Large ribosomal subunit protein bL9 (147 aa).

Belongs to the bacterial ribosomal protein bL9 family.

Its function is as follows. Binds to the 23S rRNA. This chain is Large ribosomal subunit protein bL9, found in Phocaeicola vulgatus (strain ATCC 8482 / DSM 1447 / JCM 5826 / CCUG 4940 / NBRC 14291 / NCTC 11154) (Bacteroides vulgatus).